We begin with the raw amino-acid sequence, 215 residues long: uncharacterized protein (215 aa).

The next 6 membrane-spanning stretches (helical) occupy residues 3-23 (LLAY…LRSI), 30-50 (ANLL…GLTW), 59-79 (LGLS…LRFW), 87-107 (WGTY…AICV), 122-142 (VSTC…SNIY), and 156-176 (VLFG…LIYV).

This sequence belongs to the major facilitator superfamily. Allantoate permease family.

The protein localises to the membrane. This is an uncharacterized protein from Saccharomyces cerevisiae (strain ATCC 204508 / S288c) (Baker's yeast).